The chain runs to 509 residues: Seipin-3 (509 aa).

The tract at residues tyrosine 33–valine 73 is disordered. Residues aspartate 52–serine 63 are compositionally biased toward low complexity. The next 2 membrane-spanning stretches (helical) occupy residues leucine 238–isoleucine 258 and leucine 455–phenylalanine 475.

Belongs to the seipin family. In terms of tissue distribution, expressed in seeds, seedlings, leaves, stems and roots. Not detected in flowers.

It localises to the endoplasmic reticulum membrane. Functionally, involved in lipid metabolism and lipid droplet (LD) morphology, number, and size. Supports the formation of small-sized LDs and modulates triacylglycerol accumulation. Induces probably a reorganization of the endoplasmic reticulum into LD-forming domains. This is Seipin-3 from Arabidopsis thaliana (Mouse-ear cress).